The primary structure comprises 261 residues: Na(+)-translocating NADH-quinone reductase subunit C (261 aa).

Residues 12 to 32 (LGVVIGLSLVCSIIVSTAAVG) traverse the membrane as a helical segment. Threonine 229 is modified (FMN phosphoryl threonine).

It belongs to the NqrC family. Composed of six subunits; NqrA, NqrB, NqrC, NqrD, NqrE and NqrF. It depends on FMN as a cofactor.

The protein resides in the cell inner membrane. It carries out the reaction a ubiquinone + n Na(+)(in) + NADH + H(+) = a ubiquinol + n Na(+)(out) + NAD(+). In terms of biological role, NQR complex catalyzes the reduction of ubiquinone-1 to ubiquinol by two successive reactions, coupled with the transport of Na(+) ions from the cytoplasm to the periplasm. NqrA to NqrE are probably involved in the second step, the conversion of ubisemiquinone to ubiquinol. This is Na(+)-translocating NADH-quinone reductase subunit C from Vibrio parahaemolyticus serotype O3:K6 (strain RIMD 2210633).